A 388-amino-acid chain; its full sequence is Chorismate synthase (388 aa).

NADP(+)-binding residues include Arg39 and Arg45. Residues 130–132 (RSS), 251–252 (NA), Gly296, 311–315 (KPIPT), and Arg337 contribute to the FMN site.

It belongs to the chorismate synthase family. In terms of assembly, homotetramer. The cofactor is FMNH2.

It catalyses the reaction 5-O-(1-carboxyvinyl)-3-phosphoshikimate = chorismate + phosphate. Its pathway is metabolic intermediate biosynthesis; chorismate biosynthesis; chorismate from D-erythrose 4-phosphate and phosphoenolpyruvate: step 7/7. In terms of biological role, catalyzes the anti-1,4-elimination of the C-3 phosphate and the C-6 proR hydrogen from 5-enolpyruvylshikimate-3-phosphate (EPSP) to yield chorismate, which is the branch point compound that serves as the starting substrate for the three terminal pathways of aromatic amino acid biosynthesis. This reaction introduces a second double bond into the aromatic ring system. The sequence is that of Chorismate synthase from Streptococcus uberis (strain ATCC BAA-854 / 0140J).